The chain runs to 478 residues: Sporozoite surface protein P36p (478 aa).

Residues 1–41 (MYVLVLIHMCYHFTMKRKKLFVYFIFLSFIINFNFNININF) form the signal peptide. 6-Cys domains are found at residues 42–178 (VCSN…IKKT) and 181–326 (KIKG…FDNN). Intrachain disulfides connect cysteine 59-cysteine 71, cysteine 85-cysteine 159, cysteine 102-cysteine 157, cysteine 185-cysteine 209, cysteine 223-cysteine 302, and cysteine 243-cysteine 300. N-linked (GlcNAc...) asparagine glycosylation is found at asparagine 109 and asparagine 138. Residues asparagine 229, asparagine 279, and asparagine 291 are each glycosylated (N-linked (GlcNAc...) asparagine). Serine 455 is lipidated: GPI-anchor amidated serine. Residues 456 to 478 (SSKYILFNNFLILFIFLIYIYST) constitute a propeptide, removed in mature form.

The protein resides in the cell surface. The protein localises to the cell membrane. Its function is as follows. Involved in sporozoite infection of hepatocytes and replication therein. In Plasmodium falciparum (isolate 3D7), this protein is Sporozoite surface protein P36p (PF52).